Here is a 138-residue protein sequence, read N- to C-terminus: MSMMKEFREFAMRGNVVDLAVGVIIGAAFGKIVSSFVADIIMPPLGLLIGGVDFKQFHLVLREAQGAVPAVVMNYGSFIQTIFDFVIVAFAIFLAIKLMNKVRRKQEEAPAAPPAPTAEEKLLTEIRDLLSQQQQPKL.

Helical transmembrane passes span 10–30 (FAMR…AAFG) and 76–96 (GSFI…FLAI).

It belongs to the MscL family. Homopentamer.

It is found in the cell inner membrane. Functionally, channel that opens in response to stretch forces in the membrane lipid bilayer. May participate in the regulation of osmotic pressure changes within the cell. This is Large-conductance mechanosensitive channel from Serratia proteamaculans (strain 568).